The primary structure comprises 792 residues: Alpha-1,6-mannosylglycoprotein 6-beta-N-acetylglucosaminyltransferase B (792 aa).

Residues 1 to 24 lie on the Cytoplasmic side of the membrane; the sequence is MITVNPDGKIMVRRCLVTLRPFRL. The chain crosses the membrane as a helical; Signal-anchor for type II membrane protein span at residues 25–45; it reads FVLGIGFFTLCFLMTSLGGQF. Topologically, residues 46 to 792 are lumenal; that stretch reads SARRLGDSPF…GQVALCQGCL (747 aa). Residue Asn-127 is glycosylated (N-linked (GlcNAc...) asparagine). 4 cysteine pairs are disulfide-bonded: Cys-157–Cys-195, Cys-168–Cys-208, Cys-184–Cys-353, and Cys-387–Cys-644. A glycan (N-linked (GlcNAc...) asparagine) is linked at Asn-675. Intrachain disulfides connect Cys-700–Cys-775, Cys-704–Cys-777, Cys-711–Cys-764, Cys-732–Cys-753, and Cys-788–Cys-791.

Belongs to the glycosyltransferase 18 family. Mn(2+) serves as cofactor. Present in brain (at protein level). Predominantly expressed in hippocampus, superficial layers of the brain cortex, striatum, nucleus accumbens, a subset of nuclei in the thalamus, inferior colliculus, brain stem and cerebellum.

Its subcellular location is the golgi apparatus membrane. It carries out the reaction N(4)-{beta-D-GlcNAc-(1-&gt;2)-[beta-D-GlcNAc-(1-&gt;4)]-alpha-D-Man-(1-&gt;3)-[beta-D-GlcNAc-(1-&gt;2)-alpha-D-Man-(1-&gt;6)]-beta-D-Man-(1-&gt;4)-beta-D-GlcNAc-(1-&gt;4)-beta-D-GlcNAc}-L-asparaginyl-[protein] + UDP-N-acetyl-alpha-D-glucosamine = N(4)-{beta-D-GlcNAc-(1-&gt;2)-[beta-D-GlcNAc-(1-&gt;4)]-alpha-D-Man-(1-&gt;3)-[beta-D-GlcNAc-(1-&gt;2)-[beta-D-GlcNAc-(1-&gt;6)]-alpha-D-Man-(1-&gt;6)]-beta-D-Man-(1-&gt;4)-beta-D-GlcNAc-(1-&gt;4)-beta-D-GlcNAc}-L-asparaginyl-[protein] + UDP + H(+). The catalysed reaction is 3-O-[N-acetyl-beta-D-glucosaminyl-(1-&gt;2)-alpha-D-mannosyl]-L-seryl-[protein] + UDP-N-acetyl-alpha-D-glucosamine = O(3)-{N-acetyl-beta-D-glucosaminyl-(1-&gt;2)-[N-acetyl-beta-D-glucosaminyl-(1-&gt;6)]-alpha-D-mannosyl}-L-seryl-[protein] + UDP + H(+). It catalyses the reaction 3-O-[N-acetyl-beta-D-glucosaminyl-(1-&gt;2)-alpha-D-mannosyl]-L-threonyl-[protein] + UDP-N-acetyl-alpha-D-glucosamine = O(3)-{N-acetyl-beta-D-glucosaminyl-(1-&gt;2)-[N-acetyl-beta-D-glucosaminyl-(1-&gt;6)]-alpha-D-mannosyl}-L-threonyl-[protein] + UDP + H(+). It functions in the pathway protein modification; protein glycosylation. Glycosyltransferase that acts on alpha-linked mannose of N-glycans and O-mannosyl glycans. Catalyzes the transfer of N-acetylglucosamine (GlcNAc) to the beta 1-6 linkage of the mannose residue of GlcNAc-beta1,2-Man-alpha on both the alpha1,3- and alpha1,6-linked mannose arms in the core structure of N-glycan. Also acts on the GlcNAc-beta1,2-Man-alpha1-Ser/Thr moiety, forming a 2,6-branched structure in brain O-mannosyl glycan. Plays an active role in modulating integrin and laminin-dependent adhesion and migration of neuronal cells via its activity in the O-mannosyl glycan pathway. This is Alpha-1,6-mannosylglycoprotein 6-beta-N-acetylglucosaminyltransferase B (Mgat5b) from Mus musculus (Mouse).